The following is a 274-amino-acid chain: NH(3)-dependent NAD(+) synthetase (274 aa).

An ATP-binding site is contributed by 46–53 (GISGGQDS). Aspartate 52 provides a ligand contact to Mg(2+). Arginine 140 is a binding site for deamido-NAD(+). Threonine 160 contacts ATP. Glutamate 165 contacts Mg(2+). The deamido-NAD(+) site is built by lysine 173 and aspartate 180. Positions 189 and 211 each coordinate ATP. Position 260–261 (260–261 (HK)) interacts with deamido-NAD(+).

It belongs to the NAD synthetase family. Homodimer.

It catalyses the reaction deamido-NAD(+) + NH4(+) + ATP = AMP + diphosphate + NAD(+) + H(+). The protein operates within cofactor biosynthesis; NAD(+) biosynthesis; NAD(+) from deamido-NAD(+) (ammonia route): step 1/1. Functionally, catalyzes the ATP-dependent amidation of deamido-NAD to form NAD. Uses ammonia as a nitrogen source. This chain is NH(3)-dependent NAD(+) synthetase, found in Streptococcus sanguinis (strain SK36).